We begin with the raw amino-acid sequence, 812 residues long: Phenylalanine--tRNA ligase beta subunit (812 aa).

The tRNA-binding domain maps to 39-155 (SKTFAPFTIA…ADAPVGAGYA (117 aa)). Residues 405–480 (PEDRVIDFPL…RIVGVDKVPM (76 aa)) enclose the B5 domain. Residues Asp-458, Asp-464, Glu-467, and Glu-468 each coordinate Mg(2+). Positions 718 to 811 (PAFQPVSRDF…VAKRTGGSLR (94 aa)) constitute an FDX-ACB domain.

The protein belongs to the phenylalanyl-tRNA synthetase beta subunit family. Type 1 subfamily. Tetramer of two alpha and two beta subunits. Mg(2+) is required as a cofactor.

Its subcellular location is the cytoplasm. The catalysed reaction is tRNA(Phe) + L-phenylalanine + ATP = L-phenylalanyl-tRNA(Phe) + AMP + diphosphate + H(+). This chain is Phenylalanine--tRNA ligase beta subunit, found in Nitrobacter winogradskyi (strain ATCC 25391 / DSM 10237 / CIP 104748 / NCIMB 11846 / Nb-255).